We begin with the raw amino-acid sequence, 356 residues long: 4-hydroxy-3-methylbut-2-en-1-yl diphosphate synthase (flavodoxin) (356 aa).

[4Fe-4S] cluster is bound by residues Cys264, Cys267, Cys299, and Glu306.

It belongs to the IspG family. It depends on [4Fe-4S] cluster as a cofactor.

The enzyme catalyses (2E)-4-hydroxy-3-methylbut-2-enyl diphosphate + oxidized [flavodoxin] + H2O + 2 H(+) = 2-C-methyl-D-erythritol 2,4-cyclic diphosphate + reduced [flavodoxin]. It participates in isoprenoid biosynthesis; isopentenyl diphosphate biosynthesis via DXP pathway; isopentenyl diphosphate from 1-deoxy-D-xylulose 5-phosphate: step 5/6. In terms of biological role, converts 2C-methyl-D-erythritol 2,4-cyclodiphosphate (ME-2,4cPP) into 1-hydroxy-2-methyl-2-(E)-butenyl 4-diphosphate. This is 4-hydroxy-3-methylbut-2-en-1-yl diphosphate synthase (flavodoxin) from Natranaerobius thermophilus (strain ATCC BAA-1301 / DSM 18059 / JW/NM-WN-LF).